The following is a 54-amino-acid chain: Ovomucoid (54 aa).

Residues 4 to 54 (VDCSGYPQSACPQDYVPFCGSDNKTYSNKCNFCNAVADSNGTLTLSHFGKC) form the Kazal-like domain. 3 disulfides stabilise this stretch: Cys-6–Cys-36, Cys-14–Cys-33, and Cys-22–Cys-54. Asn-43 is a glycosylation site (N-linked (GlcNAc...) asparagine).

The protein resides in the secreted. This chain is Ovomucoid, found in Gallirallus australis (Weka).